Consider the following 799-residue polypeptide: Leucine--tRNA ligase (799 aa).

The 'HIGH' region motif lies at 39–50 (PYPSGAGLHMGH). The 'KMSKS' region motif lies at 575-579 (KMSKS). Lys578 contacts ATP.

This sequence belongs to the class-I aminoacyl-tRNA synthetase family.

The protein localises to the cytoplasm. It carries out the reaction tRNA(Leu) + L-leucine + ATP = L-leucyl-tRNA(Leu) + AMP + diphosphate. The protein is Leucine--tRNA ligase of Malacoplasma penetrans (strain HF-2) (Mycoplasma penetrans).